The primary structure comprises 998 residues: Mis18-binding protein 1 (998 aa).

A Glycyl lysine isopeptide (Lys-Gly) (interchain with G-Cter in SUMO2) cross-link involves residue Lys7. Phosphoserine occurs at positions 9, 109, and 134. Residues 122–153 are disordered; the sequence is QRDKQEQLTRSSSMLGSPQGEHTKDFPPNTDK. A compositionally biased stretch (basic and acidic residues) spans 142–153; that stretch reads EHTKDFPPNTDK. 2 positions are modified to phosphoserine: Ser169 and Ser258. Residues 336 to 422 form the SANTA domain; the sequence is VHLQEWMIKV…MFGFPHNWKE (87 aa). Disordered regions lie at residues 438–460 and 476–502; these read KTRQ…AEDK and DNSL…KERR. Over residues 488 to 497 the composition is skewed to polar residues; it reads PLNSLEQPTS. A phosphothreonine mark is found at Thr516 and Thr578. 2 positions are modified to phosphoserine: Ser638 and Ser639. A disordered region spans residues 638 to 660; it reads SSEENEVEIKSRTRARNTKERLN. Residues 644–660 show a composition bias toward basic and acidic residues; the sequence is VEIKSRTRARNTKERLN. Thr688 carries the phosphothreonine modification. Lys707 participates in a covalent cross-link: Glycyl lysine isopeptide (Lys-Gly) (interchain with G-Cter in SUMO2). Position 726 is a phosphoserine (Ser726). The 56-residue stretch at 741-796 folds into the SANT domain; sequence TDDEEWSEQELQKLHCAFTSLPKHKPGFWSDVAMAVGSRTADECQKKYTEEPQGQG. Residue Lys765 forms a Glycyl lysine isopeptide (Lys-Gly) (interchain with G-Cter in SUMO2) linkage. The interval 784–821 is disordered; that stretch reads CQKKYTEEPQGQGSRKHGSKKKQANKVQNGEKDSADAK. Over residues 797 to 807 the composition is skewed to basic residues; it reads SRKHGSKKKQA. The span at 812–821 shows a compositional bias: basic and acidic residues; the sequence is NGEKDSADAK. Residues Lys821, Lys828, and Lys847 each participate in a glycyl lysine isopeptide (Lys-Gly) (interchain with G-Cter in SUMO2) cross-link. Ser872 carries the phosphoserine modification. Residue Lys948 forms a Glycyl lysine isopeptide (Lys-Gly) (interchain with G-Cter in SUMO2) linkage. Residues Ser955 and Ser985 each carry the phosphoserine modification. Residues 976–998 form a disordered region; that stretch reads SKYFIDDTESDEEEKDYYFSNSD. Over residues 981–990 the composition is skewed to acidic residues; it reads DDTESDEEEK.

In terms of assembly, interacts with SP1. Interacts with MIS18A. Identified in a complex containing MIS18A, OIP5/MIS18B, MIS18BP1, RBBP7 and RBBP4. Interacts with KAT7/HBO1. Interacts (via N-terminus) with FLNA (via N-terminus).

Its subcellular location is the nucleus. It is found in the chromosome. It localises to the centromere. Functionally, required for recruitment of CENPA to centromeres and normal chromosome segregation during mitosis. The protein is Mis18-binding protein 1 (Mis18bp1) of Mus musculus (Mouse).